The following is a 154-amino-acid chain: Basic phospholipase A2 PC20 (154 aa).

Residues 1–21 (MYPAHLLVLLAVCVSLLGASA) form the signal peptide. A propeptide spanning residues 22–27 (ISPRPL) is cleaved from the precursor. 7 disulfides stabilise this stretch: cysteine 38–cysteine 98, cysteine 54–cysteine 143, cysteine 56–cysteine 72, cysteine 71–cysteine 125, cysteine 78–cysteine 118, cysteine 87–cysteine 111, and cysteine 105–cysteine 116. Ca(2+)-binding residues include tyrosine 55, serine 57, and glycine 59. Histidine 75 is an active-site residue. Aspartate 76 is a Ca(2+) binding site. The active site involves aspartate 119.

This sequence belongs to the phospholipase A2 family. Group I subfamily. D49 sub-subfamily. Requires Ca(2+) as cofactor. Expressed by the venom gland.

Its subcellular location is the secreted. It carries out the reaction a 1,2-diacyl-sn-glycero-3-phosphocholine + H2O = a 1-acyl-sn-glycero-3-phosphocholine + a fatty acid + H(+). Its function is as follows. Snake venom phospholipase A2 (PLA2) that inhibits neuromuscular transmission by blocking acetylcholine release from the nerve termini. PLA2 catalyzes the calcium-dependent hydrolysis of the 2-acyl groups in 3-sn-phosphoglycerides. This chain is Basic phospholipase A2 PC20, found in Laticauda colubrina (Yellow-lipped sea krait).